The chain runs to 350 residues: S-adenosylmethionine:tRNA ribosyltransferase-isomerase (350 aa).

It belongs to the QueA family. Monomer.

It localises to the cytoplasm. It catalyses the reaction 7-aminomethyl-7-carbaguanosine(34) in tRNA + S-adenosyl-L-methionine = epoxyqueuosine(34) in tRNA + adenine + L-methionine + 2 H(+). It functions in the pathway tRNA modification; tRNA-queuosine biosynthesis. Transfers and isomerizes the ribose moiety from AdoMet to the 7-aminomethyl group of 7-deazaguanine (preQ1-tRNA) to give epoxyqueuosine (oQ-tRNA). This Aliivibrio salmonicida (strain LFI1238) (Vibrio salmonicida (strain LFI1238)) protein is S-adenosylmethionine:tRNA ribosyltransferase-isomerase.